Here is a 323-residue protein sequence, read N- to C-terminus: Biotin synthase (323 aa).

Positions 46-264 (TEIQLSSLLS…IAVARITMPR (219 aa)) constitute a Radical SAM core domain. Positions 61, 65, and 68 each coordinate [4Fe-4S] cluster. [2Fe-2S] cluster is bound by residues cysteine 105, cysteine 136, cysteine 196, and arginine 268.

This sequence belongs to the radical SAM superfamily. Biotin synthase family. Homodimer. It depends on [4Fe-4S] cluster as a cofactor. [2Fe-2S] cluster serves as cofactor.

It carries out the reaction (4R,5S)-dethiobiotin + (sulfur carrier)-SH + 2 reduced [2Fe-2S]-[ferredoxin] + 2 S-adenosyl-L-methionine = (sulfur carrier)-H + biotin + 2 5'-deoxyadenosine + 2 L-methionine + 2 oxidized [2Fe-2S]-[ferredoxin]. It functions in the pathway cofactor biosynthesis; biotin biosynthesis; biotin from 7,8-diaminononanoate: step 2/2. Its function is as follows. Catalyzes the conversion of dethiobiotin (DTB) to biotin by the insertion of a sulfur atom into dethiobiotin via a radical-based mechanism. The polypeptide is Biotin synthase (Bordetella avium (strain 197N)).